The primary structure comprises 761 residues: Subtilisin-like protease SBT3 (761 aa).

An N-terminal signal peptide occupies residues 1–22 (MELLHLLLFSWALSAHLFLALA). A propeptide spanning residues 23–112 (QRSTYIVHLD…AYKDRTVEPH (90 aa)) is cleaved from the precursor. The Inhibitor I9 domain occupies 26–110 (TYIVHLDKSL…ISAYKDRTVE (85 aa)). Positions 116 to 606 (TSDFLKLNPS…AGHVDPNRAL (491 aa)) constitute a Peptidase S8 domain. The Charge relay system role is filled by Asp144. A disulfide bond links Cys170 and Cys181. N-linked (GlcNAc...) (complex) asparagine; alternate glycosylation is found at Asn177 and Asn203. N-linked (GlcNAc...) (paucimannose) asparagine; alternate glycans are attached at residues Asn177 and Asn203. His215 (charge relay system) is an active-site residue. Residue Asn376 is glycosylated (N-linked (GlcNAc...) (paucimannose) asparagine; partial). A disulfide bond links Cys382 and Cys401. Ser538 functions as the Charge relay system in the catalytic mechanism. Residues 574-598 (LDNTRKPIKDSDNNKAATPLDMGAG) form a disordered region. Positions 575–586 (DNTRKPIKDSDN) are enriched in basic and acidic residues. Residues Cys624 and Cys645 are joined by a disulfide bond. Asn697 and Asn745 each carry an N-linked (GlcNAc...) (complex) asparagine; alternate glycan. N-linked (GlcNAc...) (paucimannose) asparagine; alternate glycans are attached at residues Asn697 and Asn745. Positions 756-761 (PIIEVW) are necessary for prodomain cleavage and secretion.

It belongs to the peptidase S8 family. In terms of assembly, homodimer. Propeptide is internally cleaved at Asn-38 and Asp-52 in a pH-dependent manner leading to the dissociation of the propeptide from the catalytic domain and resulting in the release of the active subtilase. Cleavage occurs at pH 5.7 and to a stronger extent at pH 5.2. As to expression, expressed in flowers, cotyledons and leaves with the highest expression in roots.

Its subcellular location is the secreted. Its activity is regulated as follows. Inhibited by 1 mM 4-(2-aminoethyl)-benzenesulfonyl fluoride (AEBSF), a general inhibitor of serine proteinases, but not by the more selective serine protease inhibitors N-alpha-tosyl-L-lysinyl-chloromethylketone (TLCK), N-tosyl-L-phenylalaninyl-chloromethylketone (TPCK), leupeptin, aprotinin or benzamidine. Its proteolytic activity is autoinhibited by the non-covalent binding of the propeptide to the catalytic domain. No effect on activity by the addition of CaCl(2) or calcium chelators. Serine protease. Has preference for Gln in the P1 position and Lys in the P2 position of oligopeptide substrates. Active also with His in the P1 position. Involved in resistance against insects partly by regulating expression of systemic wound response genes and possibly by its post-ingestive activity in the insect gut. Apart from the role in defense, may be involved in regulation of pectin methylesterases (PMEs) activity and pectin methylesterification of the cell wall. This Solanum lycopersicum (Tomato) protein is Subtilisin-like protease SBT3.